Consider the following 158-residue polypeptide: Cytochrome b562 (158 aa).

4 consecutive transmembrane segments (helical) span residues 12-32 (ITLHWAIAGLVLFNYIFGETM), 46-66 (AGVGHYLHVVVGLAVLVLTLV), 87-107 (VAAGLQGLLYLLTLLVPALGM), and 121-141 (HVLAANAIMLLALVHAVSALF). 2 residues coordinate heme b: His15 and His53. Heme b-binding residues include His121 and His135.

This sequence belongs to the cytochrome b561 family. Homodimer. It depends on heme b as a cofactor.

The protein resides in the cell membrane. In terms of biological role, cytochrome b562 is an integral component of the cytochrome b-c1 complex in the cyclic electron transfer system of photosynthetic bacteria. In Cereibacter sphaeroides (strain ATCC 17023 / DSM 158 / JCM 6121 / CCUG 31486 / LMG 2827 / NBRC 12203 / NCIMB 8253 / ATH 2.4.1.) (Rhodobacter sphaeroides), this protein is Cytochrome b562.